The primary structure comprises 486 residues: MSHTAKSKTLQELDIEDIKETNPLLNLVQGQRIVQVPELVLESGVVLNNFPIAYKTWGTLNEACDNVLVICHALTGSADVADWWGPLLGNDLAFDPSRFFIICLNSMGSPYGSFSPLTINEQTGTRYGPEFPLCTVRDDVRAHRIVLDSLGVKSIACVIGGSMGGMLSLEWTAMYGNEYVKNMVALATSARHSAWCISWSEAQRQSIYSDPNYLDGYYPVEEQPVAGLSAARMSALLTYRTRNSFENKFSRRSPSIAQQQKAQKAEVRKPSTVSEHSLQIHNDGYKCKANGAIAGISGQKRQSVVSTTSSSDSLTSQSSMTSVSSVTGEVKDIKPAQTYFSAQSYLRYQGTKFINRFDANCYIAITRKLDTHDLARDRVEDITKVLSAIEQPSLIIGIQSDGLFTYSEQEFLAEYIPNSQLEKIESPEGHDAFLLEFKLINKLIVNFLKTNCKNIMDAKPRTWGGDVGNDETKTSVFGEAEEVTNW.

Positions 66–436 (NVLVICHALT…PEGHDAFLLE (371 aa)) constitute an AB hydrolase-1 domain. S162 is a catalytic residue. The active-site Nucleophile is the S162. Residues 248-274 (KFSRRSPSIAQQQKAQKAEVRKPSTVS) form a disordered region. Residues 250-262 (SRRSPSIAQQQKA) are compositionally biased toward polar residues. Residues D401 and H430 contribute to the active site.

This sequence belongs to the AB hydrolase superfamily. MetX family.

The enzyme catalyses L-homoserine + acetyl-CoA = O-acetyl-L-homoserine + CoA. Its pathway is amino-acid biosynthesis; L-methionine biosynthesis via de novo pathway; O-acetyl-L-homoserine from L-homoserine: step 1/1. In terms of biological role, commits homoserine to the methionine biosynthesis pathway by catalyzing its O-acetylation. This Saccharomyces pastorianus (Lager yeast) protein is Homoserine O-acetyltransferase (MET2).